The chain runs to 208 residues: LexA repressor (208 aa).

Residues 30-50 constitute a DNA-binding region (H-T-H motif); sequence VREICAAVGLSSTSTVHGHLS. Catalysis depends on for autocatalytic cleavage activity residues serine 129 and lysine 167.

The protein belongs to the peptidase S24 family. In terms of assembly, homodimer.

The enzyme catalyses Hydrolysis of Ala-|-Gly bond in repressor LexA.. Its function is as follows. Represses a number of genes involved in the response to DNA damage (SOS response), including recA and lexA. In the presence of single-stranded DNA, RecA interacts with LexA causing an autocatalytic cleavage which disrupts the DNA-binding part of LexA, leading to derepression of the SOS regulon and eventually DNA repair. The chain is LexA repressor from Lactobacillus acidophilus (strain ATCC 700396 / NCK56 / N2 / NCFM).